The sequence spans 343 residues: UPF0157 protein YqkA (343 aa).

Residues 8-144 enclose the N-acetyltransferase domain; that stretch reads KEATIAREIL…VKAAQGLLLS (137 aa). Residues 135 to 343 form a UPF0157 region; it reads VKAAQGLLLS…ENDENGGFTL (209 aa).

In the C-terminal section; belongs to the UPF0157 (GrpB) family.

The protein is UPF0157 protein YqkA (yqkA) of Bacillus subtilis (strain 168).